Consider the following 666-residue polypeptide: MSQQKKYIFQVEEGKEGSDGRPSVGPVYRSIFAKDGFPDPIEGMDSCWDVFRMSVEKYPNNPMLGRREIVDGKPGKYVWQTYQEVYDIVMKLGNSLRSVGVKDEAKCGIYGANSPEWIISMEACNAHGLYCVPLYDTLGADAVEFIISHSEVSIVFVEEKKISELFKTCPNSTEYMKTVVSFGGVSREQKEEAETFGLVIYAWDEFLKLGEGKQYDLPIKKKSDICTIMYTSGTTGDPKGVMISNESIVTLIAGVIRLLKSANEALTVKDVYLSYLPLAHIFDRVIEECFIQHGAAIGFWRGDVKLLIEDLAELKPTIFCAVPRVLDRVYSGLQKKLSDGGFLKKFIFDSAFSYKFGYMKKGQSHVEASPLFDKLVFSKVKQGLGGNVRIILSGAAPLASHVESFLRVVACCHVLQGYGLTESCAGTFVSLPDELGMLGTVGPPVPNVDIRLESVPEMEYDALASTARGEICIRGKTLFSGYYKREDLTKEVLIDGWLHTGDVGEWQPDGSMKIIDRKKNIFKLSQGEYVAVENIENIYGEVQAVDSVWVYGNSFESFLIAIANPNQHILERWAAENGVSGDYDALCQNEKAKEFILGELVKMAKEKKMKGFEIIKAIHLDPVPFDMERDLLTPTFKKKRPQLLKYYQSVIDEMYKTINAKFASRG.

228 to 239 (IMYTSGTTGDPK) contacts ATP. The tract at residues 495–519 (DGWLHTGDVGEWQPDGSMKIIDRKK) is fatty acid-binding.

This sequence belongs to the ATP-dependent AMP-binding enzyme family. Requires Mg(2+) as cofactor.

It catalyses the reaction a long-chain fatty acid + ATP + CoA = a long-chain fatty acyl-CoA + AMP + diphosphate. It participates in lipid metabolism; fatty acid metabolism. Activation of long-chain fatty acids for both synthesis of cellular lipids, and degradation via beta-oxidation. Preferentially uses palmitate, palmitoleate, oleate and linoleate. The chain is Long chain acyl-CoA synthetase 4 (LACS4) from Arabidopsis thaliana (Mouse-ear cress).